Consider the following 452-residue polypeptide: Nebulette (452 aa).

Positions 1 to 26 (MKVPVSGDVKEETEEENVEQEENQEA) are disordered. Acidic residues predominate over residues 11-23 (EETEEENVEQEEN). Nebulin repeat units lie at residues 29–63 (SLKP…KSKD), 64–98 (KCTF…ADLS), 101–135 (LYKD…AEKG), 138–172 (DYTH…GTHT), 173–199 (YTAE…EYKK), 206–240 (KEPS…NEMK), 263–278 (LASD…ENKG), 279–313 (LYHF…KNKG), 315–349 (SMLE…KEIK), 352–386 (SSLD…NEIK), 389–423 (GMEL…TEIK), and 426–452 (GMQV…VRMV).

As to quaternary structure, interacts (via nebulin repeats 1-5) with DESM (via rod region). Interacts (via SH3 domain) with XIRP2.

The protein resides in the cytoplasm. Its function is as follows. Binds to actin and plays an important role in the assembly of the Z-disk. May functionally link sarcomeric actin to the desmin intermediate filaments in the heart muscle sarcomeres. Isoform 2 might play a role in the assembly of focal adhesion. The polypeptide is Nebulette (Nebl) (Mus musculus (Mouse)).